Consider the following 504-residue polypeptide: Catalase (504 aa).

The first 21 residues, 1 to 21 (MQMSKSFLLITVGLASTSLQA), serve as a signal peptide directing secretion. Active-site residues include His72 and Asn145. Tyr353 lines the heme pocket.

The protein belongs to the catalase family. Requires heme as cofactor.

It localises to the periplasm. The enzyme catalyses 2 H2O2 = O2 + 2 H2O. Functionally, decomposes hydrogen peroxide into water and oxygen; serves to protect cells from the toxic effects of hydrogen peroxide. The protein is Catalase of Vibrio parahaemolyticus serotype O3:K6 (strain RIMD 2210633).